A 95-amino-acid chain; its full sequence is DNA/RNA-binding protein Alba (95 aa).

An N6-acetyllysine modification is found at Lys-13.

The protein belongs to the histone-like Alba family. In terms of processing, acetylated. Acetylation at Lys-13 decreases DNA-binding affinity.

It is found in the cytoplasm. It localises to the chromosome. Functionally, binds double-stranded DNA tightly but without sequence specificity. Involved in DNA compaction. This chain is DNA/RNA-binding protein Alba, found in Nitrosopumilus maritimus (strain SCM1).